Reading from the N-terminus, the 84-residue chain is uncharacterized protein (84 aa).

Residues 25-45 (ILMTVAGFIIAFAILVFQISF) form a helical membrane-spanning segment.

The protein localises to the membrane. This is an uncharacterized protein from Bacillus anthracis.